A 186-amino-acid chain; its full sequence is Pyridoxal 5'-phosphate synthase subunit PdxT (186 aa).

An L-glutamine-binding site is contributed by 46–48; the sequence is GES. Cys75 acts as the Nucleophile in catalysis. L-glutamine contacts are provided by residues Arg101 and 129–130; that span reads IR. Active-site charge relay system residues include His165 and Glu167.

It belongs to the glutaminase PdxT/SNO family. In the presence of PdxS, forms a dodecamer of heterodimers. Only shows activity in the heterodimer.

The catalysed reaction is aldehydo-D-ribose 5-phosphate + D-glyceraldehyde 3-phosphate + L-glutamine = pyridoxal 5'-phosphate + L-glutamate + phosphate + 3 H2O + H(+). It catalyses the reaction L-glutamine + H2O = L-glutamate + NH4(+). Its pathway is cofactor biosynthesis; pyridoxal 5'-phosphate biosynthesis. Functionally, catalyzes the hydrolysis of glutamine to glutamate and ammonia as part of the biosynthesis of pyridoxal 5'-phosphate. The resulting ammonia molecule is channeled to the active site of PdxS. This chain is Pyridoxal 5'-phosphate synthase subunit PdxT, found in Staphylococcus aureus (strain Mu3 / ATCC 700698).